The primary structure comprises 577 residues: Putative pseudouridine synthase B0024.11 (577 aa).

Catalysis depends on Asp188, which acts as the Nucleophile. The TRUD domain maps to 265–472 (GFINYFGTQR…GESSRCLFVE (208 aa)). Positions 538 to 565 (KAMRDASFKTRGDDEKTEENVLEEKGSD) are enriched in basic and acidic residues. The tract at residues 538–577 (KAMRDASFKTRGDDEKTEENVLEEKGSDDANELNLVSEDQ) is disordered.

Belongs to the pseudouridine synthase TruD family.

It catalyses the reaction a uridine in tRNA = a pseudouridine in tRNA. In Caenorhabditis elegans, this protein is Putative pseudouridine synthase B0024.11.